The following is a 457-amino-acid chain: tRNA-2-methylthio-N(6)-dimethylallyladenosine synthase (457 aa).

The MTTase N-terminal domain maps to 3–120 (KKVYVKTFGC…LPQMIDARRE (118 aa)). C12, C49, C83, C157, C161, and C164 together coordinate [4Fe-4S] cluster. In terms of domain architecture, Radical SAM core spans 143–377 (RVEGPSAFVS…QATIEENVAR (235 aa)). One can recognise a TRAM domain in the interval 380–447 (QSMLGKVERI…PHSLRGELVL (68 aa)).

The protein belongs to the methylthiotransferase family. MiaB subfamily. As to quaternary structure, monomer. [4Fe-4S] cluster is required as a cofactor.

It is found in the cytoplasm. It carries out the reaction N(6)-dimethylallyladenosine(37) in tRNA + (sulfur carrier)-SH + AH2 + 2 S-adenosyl-L-methionine = 2-methylsulfanyl-N(6)-dimethylallyladenosine(37) in tRNA + (sulfur carrier)-H + 5'-deoxyadenosine + L-methionine + A + S-adenosyl-L-homocysteine + 2 H(+). Its function is as follows. Catalyzes the methylthiolation of N6-(dimethylallyl)adenosine (i(6)A), leading to the formation of 2-methylthio-N6-(dimethylallyl)adenosine (ms(2)i(6)A) at position 37 in tRNAs that read codons beginning with uridine. In Burkholderia thailandensis (strain ATCC 700388 / DSM 13276 / CCUG 48851 / CIP 106301 / E264), this protein is tRNA-2-methylthio-N(6)-dimethylallyladenosine synthase.